Reading from the N-terminus, the 164-residue chain is Protein phosphatase 1 regulatory subunit 14C (164 aa).

Residues Met-1–Ala-19 show a composition bias toward gly residues. Residues Met-1–Thr-72 are disordered. Ser-2 bears the N-acetylserine mark. A Phosphoserine modification is found at Ser-25. Arg-27 bears the Omega-N-methylarginine mark. Position 33 is a phosphoserine (Ser-33). Positions Val-50–Gln-62 are enriched in low complexity. Thr-72 carries the phosphothreonine; by ILK1 modification.

The protein belongs to the PP1 inhibitor family. Post-translationally, has over 600-fold higher inhibitory activity when phosphorylated, creating a molecular switch for regulating the phosphorylation status of PPP1CA substrates and smooth muscle contraction. The main inhibitory site appears to be Thr-72.

The protein resides in the endomembrane system. In terms of biological role, inhibitor of the PP1 regulatory subunit PPP1CA. The polypeptide is Protein phosphatase 1 regulatory subunit 14C (Ppp1r14c) (Rattus norvegicus (Rat)).